A 184-amino-acid chain; its full sequence is Orotate phosphoribosyltransferase (184 aa).

Residues R99, K100, K103, H105, and 125 to 133 each bind 5-phospho-alpha-D-ribose 1-diphosphate; that span reads EDTTTTGNS. Positions 129 and 157 each coordinate orotate.

It belongs to the purine/pyrimidine phosphoribosyltransferase family. PyrE subfamily. As to quaternary structure, homodimer. Mg(2+) serves as cofactor.

It carries out the reaction orotidine 5'-phosphate + diphosphate = orotate + 5-phospho-alpha-D-ribose 1-diphosphate. The protein operates within pyrimidine metabolism; UMP biosynthesis via de novo pathway; UMP from orotate: step 1/2. Functionally, catalyzes the transfer of a ribosyl phosphate group from 5-phosphoribose 1-diphosphate to orotate, leading to the formation of orotidine monophosphate (OMP). The polypeptide is Orotate phosphoribosyltransferase (Corynebacterium glutamicum (strain ATCC 13032 / DSM 20300 / JCM 1318 / BCRC 11384 / CCUG 27702 / LMG 3730 / NBRC 12168 / NCIMB 10025 / NRRL B-2784 / 534)).